Consider the following 175-residue polypeptide: ATP synthase subunit delta (175 aa).

Belongs to the ATPase delta chain family. F-type ATPases have 2 components, F(1) - the catalytic core - and F(0) - the membrane proton channel. F(1) has five subunits: alpha(3), beta(3), gamma(1), delta(1), epsilon(1). F(0) has three main subunits: a(1), b(2) and c(10-14). The alpha and beta chains form an alternating ring which encloses part of the gamma chain. F(1) is attached to F(0) by a central stalk formed by the gamma and epsilon chains, while a peripheral stalk is formed by the delta and b chains.

It is found in the cell membrane. Functionally, f(1)F(0) ATP synthase produces ATP from ADP in the presence of a proton or sodium gradient. F-type ATPases consist of two structural domains, F(1) containing the extramembraneous catalytic core and F(0) containing the membrane proton channel, linked together by a central stalk and a peripheral stalk. During catalysis, ATP synthesis in the catalytic domain of F(1) is coupled via a rotary mechanism of the central stalk subunits to proton translocation. This protein is part of the stalk that links CF(0) to CF(1). It either transmits conformational changes from CF(0) to CF(1) or is implicated in proton conduction. The sequence is that of ATP synthase subunit delta from Brevibacillus brevis (strain 47 / JCM 6285 / NBRC 100599).